A 239-amino-acid chain; its full sequence is Ribosomal RNA small subunit methyltransferase G (239 aa).

Residues G77, F82, A128 to E129, and R146 contribute to the S-adenosyl-L-methionine site. The tract at residues D215–K239 is disordered.

Belongs to the methyltransferase superfamily. RNA methyltransferase RsmG family.

Its subcellular location is the cytoplasm. Specifically methylates the N7 position of guanine in position 535 of 16S rRNA. This chain is Ribosomal RNA small subunit methyltransferase G, found in Staphylococcus aureus (strain bovine RF122 / ET3-1).